Consider the following 97-residue polypeptide: Protein Vpr (97 aa).

The segment at 1-42 (MEQAPENQGPAKEPFNEWALELLEELKAEAVRHFPRPWLHAL) is homooligomerization. 3 positions are modified to phosphoserine; by host: serine 79, serine 95, and serine 97.

Belongs to the HIV-1 VPR protein family. In terms of assembly, homooligomer, may form homodimer. Interacts with p6-gag region of the Pr55 Gag precursor protein through a (Leu-X-X)4 motif near the C-terminus of the P6gag protein. Interacts with host UNG. May interact with host RAD23A/HHR23A. Interacts with host VPRBP/DCAF1, leading to hijack the CUL4A-RBX1-DDB1-DCAF1/VPRBP complex, mediating ubiquitination of host proteins such as TERT and ZGPAT and arrest of the cell cycle in G2 phase. In terms of processing, phosphorylated on several residues by host. These phosphorylations regulate VPR activity for the nuclear import of the HIV-1 pre-integration complex.

Its subcellular location is the virion. The protein resides in the host nucleus. It localises to the host extracellular space. Functionally, during virus replication, may deplete host UNG protein, and incude G2-M cell cycle arrest. Acts by targeting specific host proteins for degradation by the 26S proteasome, through association with the cellular CUL4A-DDB1 E3 ligase complex by direct interaction with host VPRPB/DCAF-1. Cell cycle arrest reportedly occurs within hours of infection and is not blocked by antiviral agents, suggesting that it is initiated by the VPR carried into the virion. Additionally, VPR induces apoptosis in a cell cycle dependent manner suggesting that these two effects are mechanistically linked. Detected in the serum and cerebrospinal fluid of AIDS patient, VPR may also induce cell death to bystander cells. In terms of biological role, during virus entry, plays a role in the transport of the viral pre-integration (PIC) complex to the host nucleus. This function is crucial for viral infection of non-dividing macrophages. May act directly at the nuclear pore complex, by binding nucleoporins phenylalanine-glycine (FG)-repeat regions. This chain is Protein Vpr, found in Human immunodeficiency virus type 1 group O (isolate ANT70) (HIV-1).